Here is a 61-residue protein sequence, read N- to C-terminus: Alpha-conotoxin-like PnMGMR-02 (61 aa).

The N-terminal stretch at 1-21 (MGMRMMFTVFLLVVLATTVVS) is a signal peptide. The propeptide occupies 22–44 (FTSDRASDGGNAAASDLIALTIK). Intrachain disulfides connect cysteine 46/cysteine 52 and cysteine 47/cysteine 60. The segment at 48-50 (SRP) is ser-Xaa-Pro motif, crucial for potent interaction with nAChR. A Cysteine amide modification is found at cysteine 60.

The protein belongs to the conotoxin A superfamily. In terms of tissue distribution, expressed by the venom duct.

The protein resides in the secreted. Alpha-conotoxins act on postsynaptic membranes, they bind to the nicotinic acetylcholine receptors (nAChR) and thus inhibit them. This toxin blocks mammalian nAChRs (alpha-7 &gt; alpha-3/beta-2). In Conus pennaceus (Feathered cone), this protein is Alpha-conotoxin-like PnMGMR-02.